Here is an 81-residue protein sequence, read N- to C-terminus: Protein L83L (81 aa).

Residues methionine 1 to lysine 28 form a disordered region. Residues alanine 14–lysine 28 are compositionally biased toward basic and acidic residues.

It belongs to the asfivirus L83L family. In terms of assembly, interacts with host IL1B.

The protein localises to the host cytoplasm. In terms of biological role, may subvert the host innate immune response by interacting with host IL1B and interfering with its function. This is Protein L83L from Ornithodoros (relapsing fever ticks).